Here is a 117-residue protein sequence, read N- to C-terminus: Pre-mRNA-splicing factor ini1 (117 aa).

It belongs to the PHF5 family.

The protein resides in the nucleus. Required for pre-mRNA splicing. This Schizosaccharomyces pombe (strain 972 / ATCC 24843) (Fission yeast) protein is Pre-mRNA-splicing factor ini1 (ini1).